Reading from the N-terminus, the 122-residue chain is MRKKSKTPNRAFKVADQIQRDLTELIARELKDPRVGMVTIQAVEVTPDYAHAKVYFSLLAGDPKACTEGLNQAAGFLRAGLFKRLHIHTVPTLHFLFDQTTERAADMNALIARAVASRAKED.

The protein belongs to the RbfA family. Monomer. Binds 30S ribosomal subunits, but not 50S ribosomal subunits or 70S ribosomes.

It is found in the cytoplasm. In terms of biological role, one of several proteins that assist in the late maturation steps of the functional core of the 30S ribosomal subunit. Associates with free 30S ribosomal subunits (but not with 30S subunits that are part of 70S ribosomes or polysomes). Required for efficient processing of 16S rRNA. May interact with the 5'-terminal helix region of 16S rRNA. In Albidiferax ferrireducens (strain ATCC BAA-621 / DSM 15236 / T118) (Rhodoferax ferrireducens), this protein is Ribosome-binding factor A.